Reading from the N-terminus, the 242-residue chain is UPF0157 protein PA4798 (242 aa).

The disordered stretch occupies residues 215–242 (AGAESTPGGPADTAYFESLRSRVSKPQD).

The protein belongs to the UPF0157 (GrpB) family.

This is UPF0157 protein PA4798 from Pseudomonas aeruginosa (strain ATCC 15692 / DSM 22644 / CIP 104116 / JCM 14847 / LMG 12228 / 1C / PRS 101 / PAO1).